The following is a 275-amino-acid chain: 2'-N-acetylparomamine deacetylase (275 aa).

3 residues coordinate Zn(2+): H14, D17, and H166.

The protein belongs to the PIGL family. Zn(2+) is required as a cofactor.

It carries out the reaction 2'-N-acetylparomamine + H2O = paromamine + acetate. It functions in the pathway antibiotic biosynthesis; butirosin biosynthesis. In terms of biological role, deacetylase involved in the biosynthesis of butirosin by mediating deacetylation of 2'-N-acetylparomamine. This Niallia circulans (Bacillus circulans) protein is 2'-N-acetylparomamine deacetylase (btrD).